Consider the following 214-residue polypeptide: MTIGIVGRKTGMTRVFTDDGVSIPVTVIEVEPNRVTQVKTADTDGYSAVQITVGERRASRVTKSEAGHFAKANVEAGRSVWELRNNSQEAFEVGASLTVEAFSAGQFIDVTGTSKGKGYAGTVKRWNFGMQDATHGNSRSHRVPGSTGQCQSPGRVFKNKKMTGHMGAERVTVQNLEIVRVDAERNLLLVKGAIPGAPGGDVIVRPAVKARTNA.

The disordered stretch occupies residues 133–155 (ATHGNSRSHRVPGSTGQCQSPGR). Glutamine 151 carries the post-translational modification N5-methylglutamine.

Belongs to the universal ribosomal protein uL3 family. Part of the 50S ribosomal subunit. Forms a cluster with proteins L14 and L19. Post-translationally, methylated by PrmB.

Functionally, one of the primary rRNA binding proteins, it binds directly near the 3'-end of the 23S rRNA, where it nucleates assembly of the 50S subunit. The sequence is that of Large ribosomal subunit protein uL3 from Cellvibrio japonicus (strain Ueda107) (Pseudomonas fluorescens subsp. cellulosa).